The sequence spans 562 residues: T-complex protein 1 subunit epsilon (562 aa).

The protein belongs to the TCP-1 chaperonin family. As to quaternary structure, heterooligomeric complex of about 850 to 900 kDa that forms two stacked rings, 12 to 16 nm in diameter.

It is found in the cytoplasm. Molecular chaperone; assists the folding of proteins upon ATP hydrolysis. Known to play a role, in vitro, in the folding of actin and tubulin. In yeast may play a role in mitotic spindle formation. This chain is T-complex protein 1 subunit epsilon (CCT5), found in Saccharomyces cerevisiae (strain ATCC 204508 / S288c) (Baker's yeast).